Here is a 294-residue protein sequence, read N- to C-terminus: Shikimate dehydrogenase (NADP(+)) (294 aa).

Residues 25–27 (SAS) and T72 contribute to the shikimate site. K76 (proton acceptor) is an active-site residue. Shikimate is bound by residues N97 and D112. NADP(+) is bound by residues 136 to 140 (GAGGA) and T234. Y236 is a shikimate binding site. Residue G257 participates in NADP(+) binding.

This sequence belongs to the shikimate dehydrogenase family. Homodimer.

It catalyses the reaction shikimate + NADP(+) = 3-dehydroshikimate + NADPH + H(+). It participates in metabolic intermediate biosynthesis; chorismate biosynthesis; chorismate from D-erythrose 4-phosphate and phosphoenolpyruvate: step 4/7. In terms of biological role, involved in the biosynthesis of the chorismate, which leads to the biosynthesis of aromatic amino acids. Catalyzes the reversible NADPH linked reduction of 3-dehydroshikimate (DHSA) to yield shikimate (SA). The sequence is that of Shikimate dehydrogenase (NADP(+)) from Symbiobacterium thermophilum (strain DSM 24528 / JCM 14929 / IAM 14863 / T).